The primary structure comprises 408 residues: Dual-specificity RNA methyltransferase RlmN (408 aa).

Residue Glu-120 is the Proton acceptor of the active site. The 250-residue stretch at 126 to 375 (EEGRGTLCIS…IRTPRGRDIL (250 aa)) folds into the Radical SAM core domain. Residues Cys-133 and Cys-378 are joined by a disulfide bond. Residues Cys-140, Cys-144, and Cys-147 each contribute to the [4Fe-4S] cluster site. S-adenosyl-L-methionine contacts are provided by residues 204-205 (GE), Ser-236, 258-260 (SLH), and Asn-335. The active-site S-methylcysteine intermediate is Cys-378.

Belongs to the radical SAM superfamily. RlmN family. [4Fe-4S] cluster is required as a cofactor.

Its subcellular location is the cytoplasm. The enzyme catalyses adenosine(2503) in 23S rRNA + 2 reduced [2Fe-2S]-[ferredoxin] + 2 S-adenosyl-L-methionine = 2-methyladenosine(2503) in 23S rRNA + 5'-deoxyadenosine + L-methionine + 2 oxidized [2Fe-2S]-[ferredoxin] + S-adenosyl-L-homocysteine. The catalysed reaction is adenosine(37) in tRNA + 2 reduced [2Fe-2S]-[ferredoxin] + 2 S-adenosyl-L-methionine = 2-methyladenosine(37) in tRNA + 5'-deoxyadenosine + L-methionine + 2 oxidized [2Fe-2S]-[ferredoxin] + S-adenosyl-L-homocysteine. In terms of biological role, specifically methylates position 2 of adenine 2503 in 23S rRNA and position 2 of adenine 37 in tRNAs. m2A2503 modification seems to play a crucial role in the proofreading step occurring at the peptidyl transferase center and thus would serve to optimize ribosomal fidelity. This chain is Dual-specificity RNA methyltransferase RlmN, found in Rhizobium johnstonii (strain DSM 114642 / LMG 32736 / 3841) (Rhizobium leguminosarum bv. viciae).